A 599-amino-acid polypeptide reads, in one-letter code: Elongation factor 4 (599 aa).

The tr-type G domain occupies 5-187 (SHIRNFSIIA…RLVTVIPAPE (183 aa)). Residues 17-22 (DHGKST) and 134-137 (NKMD) contribute to the GTP site.

This sequence belongs to the TRAFAC class translation factor GTPase superfamily. Classic translation factor GTPase family. LepA subfamily.

It localises to the cell inner membrane. The catalysed reaction is GTP + H2O = GDP + phosphate + H(+). Functionally, required for accurate and efficient protein synthesis under certain stress conditions. May act as a fidelity factor of the translation reaction, by catalyzing a one-codon backward translocation of tRNAs on improperly translocated ribosomes. Back-translocation proceeds from a post-translocation (POST) complex to a pre-translocation (PRE) complex, thus giving elongation factor G a second chance to translocate the tRNAs correctly. Binds to ribosomes in a GTP-dependent manner. The sequence is that of Elongation factor 4 from Pseudomonas paraeruginosa (strain DSM 24068 / PA7) (Pseudomonas aeruginosa (strain PA7)).